Here is a 643-residue protein sequence, read N- to C-terminus: Transcription elongation factor B polypeptide 3 (643 aa).

A TFIIS N-terminal domain is found at 9 to 82 (DVVRHYQRSI…TKWKAMVAKE (74 aa)). Disordered regions lie at residues 86 to 289 (IAST…MGAN) and 302 to 351 (SSKK…SKKP). A compositionally biased stretch (basic and acidic residues) spans 94–106 (HNEEDSGKTKSSD). Over residues 114–124 (KGGNSSSGEDL) the composition is skewed to polar residues. Position 120 is a phosphoserine (serine 120). Over residues 127-136 (SKHKSKHAKS) the composition is skewed to basic residues. Basic and acidic residues-rich tracts occupy residues 164 to 198 (HDKS…KDSS) and 207 to 237 (SKSE…VKDK). A compositionally biased stretch (basic residues) spans 238-255 (SSKHKSSSSKSSKRSHSP). The span at 302-336 (SSKKSSSNSKSKFVAKPTAAPSSSALSAPTTAGSS) shows a compositional bias: low complexity. The interval 413–571 (AQGISSKTMR…PPRSVQRKQE (159 aa)) is activation domain. The interacting with Elongin BC complex stretch occupies residues 439–448 (SLFDLCTRVL).

Its subcellular location is the nucleus. SIII, also known as elongin, is a general transcription elongation factor that increases the RNA polymerase II transcription elongation past template-encoded arresting sites. Subunit A is transcriptionally active and its transcription activity is strongly enhanced by binding to the dimeric complex of the SIII regulatory subunits B and C (elongin BC complex). May play an important role in metamorphosis. In Drosophila melanogaster (Fruit fly), this protein is Transcription elongation factor B polypeptide 3 (EloA).